Here is a 524-residue protein sequence, read N- to C-terminus: MTTHVGPQTTLLHQTGQISALIAGEAVQTCEASSCQMSGTPFQQWTYVTEGRYTNARTHPSDEDRRRQTTVSNPRYLAQEPPRFLLPTAQNNAPTMSQSATYSTLPVQGFPEQNRVLDNRSDPKYGPLPATTGSLAQYSIQRPSTSRNMENAGSSSSYYDAPSCSRGSVGSIGRMNDLDSQYSGSTTAFPSPVHSDSSPIYPAIAPISGYQQQLPIHQRHTTSSMPSGFENLLHHHSTSPSPPPRCASSSSRYRLFIRQQPLAARACGAGDRDRRPVDPPPIIQLLLTEFNPNSEKDRSILQDPRFTVGCLLYPVRNPSYLPGSGSGAGSSDTNTNSNDKSRHESMSSYSQLGINLEDSHATGQSTPLLSGKAFVSPFFVDEEPDPNTAPAHPSSTDDSTYDASPRTVTHRFRNRPLPKPPACFFIFSDLSVRTAGLYRLQFRLMNWGSIEDTGQSMPILAEVWSEPFRVCAAKDFPGMRDSSLLTLRLKELGFVELKTRGQGMGKGRRVGIGSSKVSSRARVE.

Disordered regions lie at residues 114-195 (NRVL…PVHS), 322-349 (PGSG…MSSY), 380-413 (VDEE…HRFR), and 503-524 (GMGK…ARVE). Composition is skewed to polar residues over residues 131-153 (TTGS…ENAG) and 178-195 (LDSQ…PVHS). The Velvet domain maps to 248–500 (SSSSRYRLFI…ELGFVELKTR (253 aa)). Positions 393–402 (PSSTDDSTYD) are enriched in polar residues.

This sequence belongs to the velvet family. VelC subfamily. As to quaternary structure, interacts with vosA.

It is found in the nucleus. Velvet-domain-containing protein that acts as a positive regulator of sexual development. Positively regulates the production of the sexual fruiting bodies called cleistothecia. The polypeptide is Sexual development regulator velC (Emericella nidulans (strain FGSC A4 / ATCC 38163 / CBS 112.46 / NRRL 194 / M139) (Aspergillus nidulans)).